A 399-amino-acid chain; its full sequence is MSIVVENSTVLSALTEKFAEVFGDTKEVEYFFSPGRINLIGEHTDYNGGYVFPASITIGTTGLARLREDKKVKLYSENFPKLGVIEFDLDEVEKKDGELWSNYVKGMIVMLKGAGYEIDKGFELLIKGEIPTASGLSSSASLELLVGVVLDDLFNLNVPRLELVQLGQKTENDYIGVNSGILDQFAIGFGEVKKAILLDCNTLKYEMVPVELRDYDIVIMNTNKPRALTESKYNERFAETREALKRMQTRLDIQSLGELSNEEFDANTDLIGDETLIKRARHAVYENNRTKIAQKAFVAGNLTKFGELLNASHASLKDDYEVTGLELDTLAETAQKQAGVLGARMTGAGFGGCAIALVAHDNVSAFEKAVGQVYEEVVGYPASFYVAQIGSGSTKLDVE.

A substrate-binding site is contributed by 42 to 45; that stretch reads EHTD. ATP-binding positions include S76 and 133–139; that span reads ASGLSSS. 2 residues coordinate Mg(2+): S139 and E171. D183 functions as the Proton acceptor in the catalytic mechanism. Substrate is bound at residue Y233.

This sequence belongs to the GHMP kinase family. GalK subfamily. In terms of assembly, monomer.

Its subcellular location is the cytoplasm. It catalyses the reaction alpha-D-galactose + ATP = alpha-D-galactose 1-phosphate + ADP + H(+). Its pathway is carbohydrate metabolism; galactose metabolism. Catalyzes the transfer of the gamma-phosphate of ATP to D-galactose to form alpha-D-galactose-1-phosphate (Gal-1-P). In Lactococcus lactis subsp. lactis (strain IL1403) (Streptococcus lactis), this protein is Galactokinase.